Reading from the N-terminus, the 311-residue chain is Acetaldehyde dehydrogenase (311 aa).

Cysteine 131 acts as the Acyl-thioester intermediate in catalysis. NAD(+) contacts are provided by residues 162–170 and asparagine 273; that span reads SVGPGTRKN.

The protein belongs to the acetaldehyde dehydrogenase family.

The enzyme catalyses acetaldehyde + NAD(+) + CoA = acetyl-CoA + NADH + H(+). The protein is Acetaldehyde dehydrogenase of Ralstonia pickettii (strain 12J).